Here is a 259-residue protein sequence, read N- to C-terminus: Glutamate racemase (259 aa).

Residues 12–13 and 44–45 contribute to the substrate site; these read DS and YG. Cysteine 75 acts as the Proton donor/acceptor in catalysis. 76–77 serves as a coordination point for substrate; that stretch reads NT. Cysteine 186 serves as the catalytic Proton donor/acceptor. 187–188 provides a ligand contact to substrate; it reads TH.

It belongs to the aspartate/glutamate racemases family.

It catalyses the reaction L-glutamate = D-glutamate. Its pathway is cell wall biogenesis; peptidoglycan biosynthesis. Its function is as follows. Provides the (R)-glutamate required for cell wall biosynthesis. This Clostridium novyi (strain NT) protein is Glutamate racemase.